Consider the following 238-residue polypeptide: Probable septum site-determining protein MinC (238 aa).

It belongs to the MinC family. In terms of assembly, interacts with MinD and FtsZ.

Its function is as follows. Cell division inhibitor that blocks the formation of polar Z ring septums. Rapidly oscillates between the poles of the cell to destabilize FtsZ filaments that have formed before they mature into polar Z rings. Prevents FtsZ polymerization. The sequence is that of Probable septum site-determining protein MinC from Xylella fastidiosa (strain M12).